Consider the following 525-residue polypeptide: Squalene epoxidase 3 (525 aa).

Residues 9 to 29 (HCILTTTFVASLFAFLLLYVL) form a helical membrane-spanning segment. FAD contacts are provided by residues 64–65 (VA), 84–85 (ER), Arg92, Arg163, Val179, Asp341, and Met354. Helical transmembrane passes span 452–472 (LVLH…VPLP) and 477–497 (LWLG…IIKA).

Belongs to the squalene monooxygenase family. FAD is required as a cofactor. Expressed in seedlings, leaves, stems, inflorescences and siliques.

Its subcellular location is the membrane. The enzyme catalyses squalene + reduced [NADPH--hemoprotein reductase] + O2 = (S)-2,3-epoxysqualene + oxidized [NADPH--hemoprotein reductase] + H2O + H(+). It functions in the pathway terpene metabolism; lanosterol biosynthesis; lanosterol from farnesyl diphosphate: step 2/3. Functionally, catalyzes the stereospecific oxidation of squalene to (S)-2,3-epoxysqualene, and is considered to be a rate-limiting enzyme in steroid biosynthesis. Can produce not only oxidosqualene, but also 2,3:22,23-dioxidosqualene. The protein is Squalene epoxidase 3 (SQE3) of Arabidopsis thaliana (Mouse-ear cress).